A 93-amino-acid chain; its full sequence is YcgL domain-containing protein Swoo_2115 (93 aa).

In terms of domain architecture, YcgL spans 1 to 85; that stretch reads MICAVYKSRR…PVVNLLEEHK (85 aa).

This chain is YcgL domain-containing protein Swoo_2115, found in Shewanella woodyi (strain ATCC 51908 / MS32).